We begin with the raw amino-acid sequence, 139 residues long: FAD synthase (139 aa).

ATP-binding positions include 9–10, 14–17, and Asp92; these read TF and HPGH.

This sequence belongs to the archaeal FAD synthase family. As to quaternary structure, homodimer. The cofactor is a divalent metal cation.

It carries out the reaction FMN + ATP + H(+) = FAD + diphosphate. It functions in the pathway cofactor biosynthesis; FAD biosynthesis; FAD from FMN: step 1/1. Functionally, catalyzes the transfer of the AMP portion of ATP to flavin mononucleotide (FMN) to produce flavin adenine dinucleotide (FAD) coenzyme. The polypeptide is FAD synthase (Methanosarcina barkeri (strain Fusaro / DSM 804)).